The chain runs to 160 residues: Suppressyn (160 aa).

A signal peptide spans 1–39 (MACIYPTTFYTSLPTKSLNMGISLTTILILSVAVLLSTA). The disordered stretch occupies residues 137 to 160 (AKASKPTTPPENRPRHFHSFIQKL).

In terms of assembly, interacts (secreted) with SLC1A5; mainly at cell surface. As to expression, specifically expressed in placenta by extravillous trophoblasts and syncytiotrophoblasts (at protein level).

The protein resides in the secreted. Its function is as follows. May play a role in trophoblasts syncytialization, the spontaneous fusion of their plasma membranes, an essential process in placental development. May negatively regulate cell-cell fusion by interacting with SLC1A5, the probable receptor on the cell surface of the fusogenic syncytin-1/ERVW-1. The protein is Suppressyn (ERVH48-1) of Homo sapiens (Human).